Reading from the N-terminus, the 295-residue chain is UDP-N-acetylenolpyruvoylglucosamine reductase (295 aa).

The region spanning 23 to 188 is the FAD-binding PCMH-type domain; that stretch reads KVGGPADFLA…ISAKFALKPG (166 aa). R167 is a catalytic residue. The active-site Proton donor is the S217. E287 is an active-site residue.

Belongs to the MurB family. FAD serves as cofactor.

The protein localises to the cytoplasm. It carries out the reaction UDP-N-acetyl-alpha-D-muramate + NADP(+) = UDP-N-acetyl-3-O-(1-carboxyvinyl)-alpha-D-glucosamine + NADPH + H(+). It participates in cell wall biogenesis; peptidoglycan biosynthesis. Functionally, cell wall formation. In Streptococcus pyogenes serotype M6 (strain ATCC BAA-946 / MGAS10394), this protein is UDP-N-acetylenolpyruvoylglucosamine reductase.